The sequence spans 227 residues: UPF0173 metal-dependent hydrolase BALH_4194 (227 aa).

The protein belongs to the UPF0173 family.

In Bacillus thuringiensis (strain Al Hakam), this protein is UPF0173 metal-dependent hydrolase BALH_4194.